We begin with the raw amino-acid sequence, 853 residues long: MRVRGIERNCQNLWKWGIMLLGILMTCSNADNLWVTVYYGVPVWKEATTTLFCASDAKSYKTEAHNIWATHACVPTDPNPQEIELENVTENFNMWRNNMVEQMHEDIISLWDQSLKPCVKLTPLCVTLNCIDEVMENVTMKNNNVTEEIRMKNCSFNITTVVRDKTKQVHALFYRLDIVPIDNDNSTNSTNYRLINCNTSAITQACPKVSFEPIPIHYCAPAGFAILKCRDKRFNGTGPCTNVSTVQCTHGIRPVVSTQLLLNGSLAEEEIIIRSENLTNNAKIIIVQLNESVAINCTRPYRNIRQRTSIGLGQALYTTKTRSIIGQAYCNISKNEWNKTLQQVAIKLGNLLNKTTIIFKPSSGGDPEITTHSFNCGGEFFYCNTSGLFNSTWDISKSEWANSTESDDKPITLQCRIKQIINMWQGVGKAMYAPPIEGQINCSSNITGLLLTRDGGTNNSSNETFRPGGGDMRDNWRSELYKYKVVKIEPLGVAPTRAKRRVVEREKRAIGLGAMFLGFLGAAGSTMGARSLTLTVQARQLLSGIVQQQNNLLRAIEAQQHLLQLTVWGIKQLQARILAVERYLKDQQLLGIWGCSGKLICTTTVPWNSSWSNRSLNDIWQNMTWMEWEREIDNYTGLIYRLIEESQTQQEKNEQELLELDKWASLWNWFNITQWLWYIKIFIMIVGGLIGLRIVFAVLSLVNRVRQGYSPLSFQTLLPAPRGPDRPEGIEEEGGERGRDRSIRLVNGFSALIWDDLRNLCLFSYHRLRDLILIAARIVELLGRRGWEALKYLWNLLQYWSRELKNSASSLLDTIAIAVAEGTDRVIEIVRRACRAVLHIPTRIRQGLERLLL.

Residues 1–31 form the signal peptide; sequence MRVRGIERNCQNLWKWGIMLLGILMTCSNAD. Residues 32-681 lie on the Extracellular side of the membrane; the sequence is NLWVTVYYGV…ITQWLWYIKI (650 aa). Cysteines 53 and 73 form a disulfide. 14 N-linked (GlcNAc...) asparagine; by host glycosylation sites follow: asparagine 87, asparagine 137, asparagine 144, asparagine 153, asparagine 157, asparagine 185, asparagine 188, asparagine 198, asparagine 235, asparagine 242, asparagine 263, asparagine 277, asparagine 290, and asparagine 296. 5 cysteine pairs are disulfide-bonded: cysteine 118–cysteine 206, cysteine 125–cysteine 197, cysteine 130–cysteine 154, cysteine 219–cysteine 248, and cysteine 229–cysteine 240. The V1 stretch occupies residues 130-153; it reads CIDEVMENVTMKNNNVTEEIRMKN. The tract at residues 154–197 is V2; that stretch reads CSFNITTVVRDKTKQVHALFYRLDIVPIDNDNSTNSTNYRLINC. The tract at residues 297-329 is V3; the sequence is CTRPYRNIRQRTSIGLGQALYTTKTRSIIGQAY. Cysteine 297 and cysteine 330 form a disulfide bridge. 3 N-linked (GlcNAc...) asparagine; by host glycosylation sites follow: asparagine 331, asparagine 338, and asparagine 353. The interval 362–372 is CD4-binding loop; sequence SSGGDPEITTH. 2 disulfides stabilise this stretch: cysteine 376/cysteine 442 and cysteine 383/cysteine 415. The V4 stretch occupies residues 383-415; it reads CNTSGLFNSTWDISKSEWANSTESDDKPITLQC. Residues asparagine 384, asparagine 390, asparagine 402, asparagine 441, asparagine 445, asparagine 458, asparagine 459, and asparagine 462 are each glycosylated (N-linked (GlcNAc...) asparagine; by host). V5 regions lie at residues 457 to 468 and 460 to 468; these read TNNSSNETFRPG and SSNETFRPG. The segment at 509-529 is fusion peptide; that stretch reads AIGLGAMFLGFLGAAGSTMGA. The tract at residues 571 to 589 is immunosuppression; sequence KQLQARILAVERYLKDQQL. A disulfide bridge links cysteine 595 with cysteine 601. Asparagine 608, asparagine 613, asparagine 622, asparagine 634, and asparagine 671 each carry an N-linked (GlcNAc...) asparagine; by host glycan. The stretch at 630-664 forms a coiled coil; the sequence is REIDNYTGLIYRLIEESQTQQEKNEQELLELDKWA. The tract at residues 659–680 is MPER; binding to GalCer; that stretch reads ELDKWASLWNWFNITQWLWYIK. A helical transmembrane segment spans residues 682–702; the sequence is FIMIVGGLIGLRIVFAVLSLV. At 703-853 the chain is on the cytoplasmic side; that stretch reads NRVRQGYSPL…IRQGLERLLL (151 aa). The YXXL motif; contains endocytosis signal motif lies at 709-712; it reads YSPL. 2 S-palmitoyl cysteine; by host lipidation sites follow: cysteine 761 and cysteine 834. The Di-leucine internalization motif motif lies at 852-853; sequence LL.

The protein belongs to the HIV-1 env protein family. In terms of assembly, the mature envelope protein (Env) consists of a homotrimer of non-covalently associated gp120-gp41 heterodimers. The resulting complex protrudes from the virus surface as a spike. There seems to be as few as 10 spikes on the average virion. Interacts with host CD4, CCR5 and CXCR4. Gp120 also interacts with the C-type lectins CD209/DC-SIGN and CLEC4M/DC-SIGNR (collectively referred to as DC-SIGN(R)). Gp120 and gp41 interact with GalCer. Gp120 interacts with host ITGA4/ITGB7 complex; on CD4+ T-cells, this interaction results in rapid activation of integrin ITGAL/LFA-1, which facilitates efficient cell-to-cell spreading of HIV-1. Gp120 interacts with cell-associated heparan sulfate; this interaction increases virus infectivity on permissive cells and may be involved in infection of CD4- cells. The mature envelope protein (Env) consists of a homotrimer of non-covalently associated gp120-gp41 heterodimers. The resulting complex protrudes from the virus surface as a spike. There seems to be as few as 10 spikes on the average virion. Highly glycosylated by host. The high number of glycan on the protein is reffered to as 'glycan shield' because it contributes to hide protein sequence from adaptive immune system. Post-translationally, palmitoylation of the transmembrane protein and of Env polyprotein (prior to its proteolytic cleavage) is essential for their association with host cell membrane lipid rafts. Palmitoylation is therefore required for envelope trafficking to classical lipid rafts, but not for viral replication. In terms of processing, specific enzymatic cleavages in vivo yield mature proteins. Envelope glycoproteins are synthesized as an inactive precursor that is heavily N-glycosylated and processed likely by host cell furin in the Golgi to yield the mature SU and TM proteins. The cleavage site between SU and TM requires the minimal sequence [KR]-X-[KR]-R. About 2 of the 9 disulfide bonds of gp41 are reduced by P4HB/PDI, following binding to CD4 receptor.

The protein localises to the virion membrane. It is found in the host cell membrane. It localises to the host endosome membrane. Functionally, oligomerizes in the host endoplasmic reticulum into predominantly trimers. In a second time, gp160 transits in the host Golgi, where glycosylation is completed. The precursor is then proteolytically cleaved in the trans-Golgi and thereby activated by cellular furin or furin-like proteases to produce gp120 and gp41. In terms of biological role, attaches the virus to the host lymphoid cell by binding to the primary receptor CD4. This interaction induces a structural rearrangement creating a high affinity binding site for a chemokine coreceptor like CXCR4 and/or CCR5. Acts as a ligand for CD209/DC-SIGN and CLEC4M/DC-SIGNR, which are respectively found on dendritic cells (DCs), and on endothelial cells of liver sinusoids and lymph node sinuses. These interactions allow capture of viral particles at mucosal surfaces by these cells and subsequent transmission to permissive cells. HIV subverts the migration properties of dendritic cells to gain access to CD4+ T-cells in lymph nodes. Virus transmission to permissive T-cells occurs either in trans (without DCs infection, through viral capture and transmission), or in cis (following DCs productive infection, through the usual CD4-gp120 interaction), thereby inducing a robust infection. In trans infection, bound virions remain infectious over days and it is proposed that they are not degraded, but protected in non-lysosomal acidic organelles within the DCs close to the cell membrane thus contributing to the viral infectious potential during DCs' migration from the periphery to the lymphoid tissues. On arrival at lymphoid tissues, intact virions recycle back to DCs' cell surface allowing virus transmission to CD4+ T-cells. Acts as a class I viral fusion protein. Under the current model, the protein has at least 3 conformational states: pre-fusion native state, pre-hairpin intermediate state, and post-fusion hairpin state. During fusion of viral and target intracellular membranes, the coiled coil regions (heptad repeats) assume a trimer-of-hairpins structure, positioning the fusion peptide in close proximity to the C-terminal region of the ectodomain. The formation of this structure appears to drive apposition and subsequent fusion of viral and target cell membranes. Complete fusion occurs in host cell endosomes and is dynamin-dependent, however some lipid transfer might occur at the plasma membrane. The virus undergoes clathrin-dependent internalization long before endosomal fusion, thus minimizing the surface exposure of conserved viral epitopes during fusion and reducing the efficacy of inhibitors targeting these epitopes. Membranes fusion leads to delivery of the nucleocapsid into the cytoplasm. The sequence is that of Envelope glycoprotein gp160 from Homo sapiens (Human).